We begin with the raw amino-acid sequence, 665 residues long: Methionine--tRNA ligase (665 aa).

The short motif at 16–26 (YYPSGKAHIGH) is the 'HIGH' region element. A 'KMSKS' region motif is present at residues 311 to 315 (KMSKS). Lys314 is a binding site for ATP. Residues 564–665 (DFDKIDLRVA…SALPNGAKVK (102 aa)) form the tRNA-binding domain.

It belongs to the class-I aminoacyl-tRNA synthetase family. MetG type 2B subfamily. Homodimer.

The protein localises to the cytoplasm. It catalyses the reaction tRNA(Met) + L-methionine + ATP = L-methionyl-tRNA(Met) + AMP + diphosphate. In terms of biological role, is required not only for elongation of protein synthesis but also for the initiation of all mRNA translation through initiator tRNA(fMet) aminoacylation. The protein is Methionine--tRNA ligase of Listeria monocytogenes serotype 4b (strain F2365).